Consider the following 289-residue polypeptide: Nodulation protein NolT (289 aa).

The signal sequence occupies residues 1–33 (MFGSAHGDTTSSDTSGRRPLRLVVLPLLLALSS). A lipid anchor (N-palmitoyl cysteine) is attached at cysteine 34. Residue cysteine 34 is the site of S-diacylglycerol cysteine attachment. Residues 233–253 (VAVGVGAAVFAVTCYLLFIVL) form a helical membrane-spanning segment.

It belongs to the YscJ lipoprotein family.

Its subcellular location is the cell outer membrane. Functionally, regulates cultivar-specific nodulation of soybean. The chain is Nodulation protein NolT (nolT) from Rhizobium fredii (Sinorhizobium fredii).